A 387-amino-acid chain; its full sequence is Radial spoke protein 14 (387 aa).

ARM repeat units follow at residues 24–67, 69–109, 111–150, 154–198, 204–244, 245–286, 289–328, and 330–370; these read KALP…ELLS, PVNH…LLAA, EVGARDLAQHSGLDALAAALEDPSEGVRDEAYGALIEAAR, TRRA…TCTQ, GILS…ALAT, REDA…AITI, EGKYAALESPGGLAGLVSVLDPCHEQLCINAMTAVSNVAE, and PEAR…QCRF.

The protein belongs to the flagellar radial spoke RSP14 family.

It is found in the cytoplasm. The protein localises to the cytoskeleton. Its subcellular location is the flagellum axoneme. In Chlamydomonas reinhardtii (Chlamydomonas smithii), this protein is Radial spoke protein 14 (RSP14).